The chain runs to 368 residues: Quinolinate synthase (368 aa).

Iminosuccinate contacts are provided by histidine 46 and serine 63. Residue cysteine 110 participates in [4Fe-4S] cluster binding. Residues 141-143 (YVN) and serine 162 contribute to the iminosuccinate site. Cysteine 230 is a binding site for [4Fe-4S] cluster. Iminosuccinate contacts are provided by residues 256–258 (HPE) and threonine 273. Cysteine 320 contacts [4Fe-4S] cluster.

It belongs to the quinolinate synthase family. Type 3 subfamily. Requires [4Fe-4S] cluster as cofactor.

The protein resides in the cytoplasm. The enzyme catalyses iminosuccinate + dihydroxyacetone phosphate = quinolinate + phosphate + 2 H2O + H(+). It functions in the pathway cofactor biosynthesis; NAD(+) biosynthesis; quinolinate from iminoaspartate: step 1/1. Its function is as follows. Catalyzes the condensation of iminoaspartate with dihydroxyacetone phosphate to form quinolinate. The chain is Quinolinate synthase from Bacillus cereus (strain ZK / E33L).